Reading from the N-terminus, the 209-residue chain is Glycolipid transfer protein (209 aa).

At A2 the chain carries N-acetylalanine. Tandem repeats lie at residues 45-55 and 56-66. The interval 45 to 66 is 2 X 12 AA approximate tandem repeats; sequence IKADISGNITKIKAVYDTNPAK. 48 to 55 provides a ligand contact to beta-D-galactosyl-(1-&gt;4)-beta-D-glucosyl-(1&lt;-&gt;1)-N-[(9Z)-octadecenoyl]-sphing-4-enine; it reads DISGNITK. Beta-D-galactosyl-(1-&gt;4)-beta-D-glucosyl-(1&lt;-&gt;1)-N-[(9Z)-octadecenoyl]-sphing-4-enine is bound by residues H140 and Y207.

The protein belongs to the GLTP family. As to quaternary structure, monomer. As to expression, detected in fibroblasts (at protein level). Detected in fibroblasts and in various cancer cell lines.

It localises to the cytoplasm. Functionally, accelerates the intermembrane transfer of various glycolipids. Catalyzes the transfer of various glycosphingolipids between membranes but does not catalyze the transfer of phospholipids. May be involved in the intracellular translocation of glucosylceramides. This Homo sapiens (Human) protein is Glycolipid transfer protein (GLTP).